The following is a 153-amino-acid chain: NADPH-dependent 7-cyano-7-deazaguanine reductase (153 aa).

Residues 1 to 17 are compositionally biased toward polar residues; sequence MTDTRNLTQLGSKTQAP. Positions 1–23 are disordered; it reads MTDTRNLTQLGSKTQAPASPEAA. Residue cysteine 51 is the Thioimide intermediate of the active site. The active-site Proton donor is the aspartate 58. Residues 73–75 and 92–93 each bind substrate; these read VES and HE.

It belongs to the GTP cyclohydrolase I family. QueF type 1 subfamily.

It is found in the cytoplasm. It carries out the reaction 7-aminomethyl-7-carbaguanine + 2 NADP(+) = 7-cyano-7-deazaguanine + 2 NADPH + 3 H(+). It functions in the pathway tRNA modification; tRNA-queuosine biosynthesis. Functionally, catalyzes the NADPH-dependent reduction of 7-cyano-7-deazaguanine (preQ0) to 7-aminomethyl-7-deazaguanine (preQ1). The chain is NADPH-dependent 7-cyano-7-deazaguanine reductase from Chelativorans sp. (strain BNC1).